The sequence spans 316 residues: tRNA dimethylallyltransferase (316 aa).

23–30 contacts ATP; it reads GPTASGKS. Substrate is bound at residue 25–30; the sequence is TASGKS. The interval 48–51 is interaction with substrate tRNA; sequence DSMQ.

This sequence belongs to the IPP transferase family. Monomer. Mg(2+) serves as cofactor.

It carries out the reaction adenosine(37) in tRNA + dimethylallyl diphosphate = N(6)-dimethylallyladenosine(37) in tRNA + diphosphate. In terms of biological role, catalyzes the transfer of a dimethylallyl group onto the adenine at position 37 in tRNAs that read codons beginning with uridine, leading to the formation of N6-(dimethylallyl)adenosine (i(6)A). The polypeptide is tRNA dimethylallyltransferase (Rhodopseudomonas palustris (strain BisB18)).